We begin with the raw amino-acid sequence, 487 residues long: Kynureninase 1 (487 aa).

Residues Leu147, Thr148, 175–178 (FPSD), Ser232, Asp261, His264, and Tyr286 contribute to the pyridoxal 5'-phosphate site. N6-(pyridoxal phosphate)lysine is present on Lys287. Residues Trp327 and Asn355 each coordinate pyridoxal 5'-phosphate.

It belongs to the kynureninase family. As to quaternary structure, homodimer. It depends on pyridoxal 5'-phosphate as a cofactor.

It is found in the cytoplasm. It catalyses the reaction L-kynurenine + H2O = anthranilate + L-alanine + H(+). The catalysed reaction is 3-hydroxy-L-kynurenine + H2O = 3-hydroxyanthranilate + L-alanine + H(+). The protein operates within amino-acid degradation; L-kynurenine degradation; L-alanine and anthranilate from L-kynurenine: step 1/1. It participates in cofactor biosynthesis; NAD(+) biosynthesis; quinolinate from L-kynurenine: step 2/3. Functionally, catalyzes the cleavage of L-kynurenine (L-Kyn) and L-3-hydroxykynurenine (L-3OHKyn) into anthranilic acid (AA) and 3-hydroxyanthranilic acid (3-OHAA), respectively. The sequence is that of Kynureninase 1 (bna5-1) from Aspergillus oryzae (strain ATCC 42149 / RIB 40) (Yellow koji mold).